The following is a 762-amino-acid chain: Transcription factor kpeA (762 aa).

The tract at residues 267-361 (FDHTSHGSQS…PLKPDQRKQA (95 aa)) is disordered. Low complexity predominate over residues 294–312 (KKPSSPTRSTGSSSSTSPP). Positions 370–401 (CLRCKFLKKTCDKGEPCAGCQPSHARLWQVPC) form a DNA-binding region, zn(2)-C6 fungal-type.

The protein localises to the nucleus. In terms of biological role, transcription factor that regulates conidiation as well as kojic acid production, likely by negatively controlling kojR and kojA expression. This chain is Transcription factor kpeA, found in Aspergillus oryzae (strain ATCC 42149 / RIB 40) (Yellow koji mold).